A 92-amino-acid polypeptide reads, in one-letter code: Small ribosomal subunit protein uS17 (92 aa).

Belongs to the universal ribosomal protein uS17 family. In terms of assembly, part of the 30S ribosomal subunit.

Functionally, one of the primary rRNA binding proteins, it binds specifically to the 5'-end of 16S ribosomal RNA. In Wigglesworthia glossinidia brevipalpis, this protein is Small ribosomal subunit protein uS17.